A 539-amino-acid chain; its full sequence is Transcription factor LG2 (539 aa).

A compositionally biased stretch (polar residues) spans 115–125 (MRQQQQLHSGN). Disordered regions lie at residues 115 to 140 (MRQQ…SAQN) and 181 to 246 (KPGL…KSRL). Low complexity-rich tracts occupy residues 126-137 (SQSVGSTTDSSS) and 192-205 (QQQH…QQQL). Residues 219 to 242 (TRKDGKSVDAKTERRLAQNREAAR) are compositionally biased toward basic and acidic residues. The bZIP domain occupies 227–271 (DAKTERRLAQNREAARKSRLRKKAYVQNLETSRVRLQQIEQELQR). The segment at 229-249 (KTERRLAQNREAARKSRLRKK) is basic motif. The interval 255–269 (LETSRVRLQQIEQEL) is leucine-zipper. The DOG1 domain occupies 292-506 (AAMFDMEYAR…RALSNLWSSR (215 aa)). The tract at residues 513–539 (GTESVSPTGTELQPMHNQPQQNQYSGF) is disordered.

It belongs to the bZIP family. As to quaternary structure, interacts with NPR1/NH1 and NPR3/NH3.

It localises to the nucleus. In terms of biological role, transcriptional regulator involved in defense response. Acts as a transcriptional activator in vitro. This Oryza sativa subsp. japonica (Rice) protein is Transcription factor LG2.